The chain runs to 73 residues: Large ribosomal subunit protein bL31 (73 aa).

Belongs to the bacterial ribosomal protein bL31 family. Type A subfamily. In terms of assembly, part of the 50S ribosomal subunit.

Functionally, binds the 23S rRNA. The chain is Large ribosomal subunit protein bL31 from Rhizobium etli (strain CIAT 652).